Here is a 145-residue protein sequence, read N- to C-terminus: Lysozyme-like protein 4 (145 aa).

A signal peptide spans 1-19 (MQLYLVLLLISYLLTPIGA). The 126-residue stretch at 20–145 (SILGRCTVAK…LDRWLDGCDL (126 aa)) folds into the C-type lysozyme domain. 4 disulfide bridges follow: Cys25–Cys143, Cys49–Cys130, Cys84–Cys95, and Cys91–Cys109. The active site involves Glu54.

The protein belongs to the glycosyl hydrolase 22 family. As to quaternary structure, monomer. As to expression, expressed strongly in testis and in epididymis, and weakly in brain and lung. Detected in sperm (at protein level).

The protein localises to the secreted. It localises to the cytoplasmic vesicle. Its subcellular location is the secretory vesicle. The protein resides in the acrosome. It is found in the cell projection. The protein localises to the cilium. It localises to the flagellum. In terms of biological role, may be involved in fertilization. Has no detectable bacteriolytic in vitro. Has no lysozyme activity in vitro. The protein is Lysozyme-like protein 4 (Lyzl4) of Mus musculus (Mouse).